We begin with the raw amino-acid sequence, 216 residues long: Elongation factor Ts (216 aa).

The segment at 81–84 (TDFV) is involved in Mg(2+) ion dislocation from EF-Tu.

The protein belongs to the EF-Ts family.

It localises to the cytoplasm. Associates with the EF-Tu.GDP complex and induces the exchange of GDP to GTP. It remains bound to the aminoacyl-tRNA.EF-Tu.GTP complex up to the GTP hydrolysis stage on the ribosome. This chain is Elongation factor Ts, found in Geobacter sulfurreducens (strain ATCC 51573 / DSM 12127 / PCA).